The chain runs to 217 residues: GrpE protein homolog 1, mitochondrial (217 aa).

The N-terminal 27 residues, 1–27 (MAARCVRLARRSLPALALSFRPSPRLL), are a transit peptide targeting the mitochondrion. An N6-acetyllysine; alternate modification is found at Lys94. Residue Lys94 is modified to N6-succinyllysine; alternate. The residue at position 100 (Lys100) is an N6-acetyllysine. At Lys120 the chain carries N6-succinyllysine. N6-acetyllysine; alternate is present on Lys215. Position 215 is an N6-succinyllysine; alternate (Lys215).

This sequence belongs to the GrpE family. As to quaternary structure, probable component of the PAM complex at least composed of a mitochondrial HSP70 protein, GRPEL1 or GRPEL2, TIMM44, TIMM16/PAM16 and TIMM14/DNAJC19. Binds to HSP70, HSC70 and HSJ1B. Ubiquitous. Particularly abundant in heart, kidney and liver.

Its subcellular location is the mitochondrion matrix. Essential component of the PAM complex, a complex required for the translocation of transit peptide-containing proteins from the inner membrane into the mitochondrial matrix in an ATP-dependent manner. Seems to control the nucleotide-dependent binding of mitochondrial HSP70 to substrate proteins. This is GrpE protein homolog 1, mitochondrial (Grpel1) from Rattus norvegicus (Rat).